The chain runs to 142 residues: Large ribosomal subunit protein uL11 (142 aa).

This sequence belongs to the universal ribosomal protein uL11 family. Part of the ribosomal stalk of the 50S ribosomal subunit. Interacts with L10 and the large rRNA to form the base of the stalk. L10 forms an elongated spine to which L12 dimers bind in a sequential fashion forming a multimeric L10(L12)X complex. Post-translationally, one or more lysine residues are methylated.

In terms of biological role, forms part of the ribosomal stalk which helps the ribosome interact with GTP-bound translation factors. The chain is Large ribosomal subunit protein uL11 from Vibrio vulnificus (strain CMCP6).